Here is a 21-residue protein sequence, read N- to C-terminus: Nigrocin-2 (21 aa).

Cys15 and Cys21 are disulfide-bonded.

In terms of tissue distribution, expressed by the skin dorsal glands.

It localises to the secreted. In terms of biological role, thanks to its single linear amphipathic alpha-helix, may integrate into membrane phospholipids, leading to lysis of the membrane. Shows antibacterial activity against both Gram-positive and Gram-negative bacteria and against the fungus C.albicans. Has no hemolytic activity. This Pelophylax nigromaculatus (Black-spotted frog) protein is Nigrocin-2.